The sequence spans 143 residues: Small ribosomal subunit protein uS12 (143 aa).

The residue at position 62 (P62) is a Hydroxyproline.

Belongs to the universal ribosomal protein uS12 family.

This is Small ribosomal subunit protein uS12 (rps23) from Dictyostelium discoideum (Social amoeba).